A 194-amino-acid polypeptide reads, in one-letter code: Large ribosomal subunit protein eL15 (194 aa).

The disordered stretch occupies residues 160 to 194; sequence RGLTSAGKKGRGLMYKGKGAEKVRPSVRANSKKAK.

The protein belongs to the eukaryotic ribosomal protein eL15 family.

In Methanococcus maripaludis (strain C6 / ATCC BAA-1332), this protein is Large ribosomal subunit protein eL15.